Consider the following 205-residue polypeptide: Large ribosomal subunit protein bL21m (205 aa).

Residues 1 to 39 constitute a mitochondrion transit peptide; it reads MAASSLTVTLGRLASACSHSILRPSGPGAASLWSASRRF.

The protein belongs to the bacterial ribosomal protein bL21 family. As to quaternary structure, component of the mitochondrial large ribosomal subunit (mt-LSU). Mature mammalian 55S mitochondrial ribosomes consist of a small (28S) and a large (39S) subunit. The 28S small subunit contains a 12S ribosomal RNA (12S mt-rRNA) and 30 different proteins. The 39S large subunit contains a 16S rRNA (16S mt-rRNA), a copy of mitochondrial valine transfer RNA (mt-tRNA(Val)), which plays an integral structural role, and 52 different proteins.

The protein resides in the mitochondrion. This Homo sapiens (Human) protein is Large ribosomal subunit protein bL21m (MRPL21).